We begin with the raw amino-acid sequence, 233 residues long: C-type lectin domain-containing protein 87 (233 aa).

An N-terminal signal peptide occupies residues 1–19 (MRFCLLVAFILPGLFLVHA). O-linked (Xyl...) (chondroitin sulfate) serine glycosylation is present at S31. A glycan (N-linked (GlcNAc...) asparagine) is linked at N81. Residues 93-223 (FADSCYWIEK…CTYMLYSICE (131 aa)) form the C-type lectin domain. Disulfide bonds link C114–C222 and C193–C214. N225 carries an N-linked (GlcNAc...) asparagine glycan.

In Caenorhabditis elegans, this protein is C-type lectin domain-containing protein 87.